Reading from the N-terminus, the 201-residue chain is Ribosomal RNA large subunit methyltransferase E (201 aa).

Positions 49, 51, 69, 90, and 113 each coordinate S-adenosyl-L-methionine. The Proton acceptor role is filled by Lys153.

It belongs to the class I-like SAM-binding methyltransferase superfamily. RNA methyltransferase RlmE family.

The protein resides in the cytoplasm. It catalyses the reaction uridine(2552) in 23S rRNA + S-adenosyl-L-methionine = 2'-O-methyluridine(2552) in 23S rRNA + S-adenosyl-L-homocysteine + H(+). In terms of biological role, specifically methylates the uridine in position 2552 of 23S rRNA at the 2'-O position of the ribose in the fully assembled 50S ribosomal subunit. The chain is Ribosomal RNA large subunit methyltransferase E from Desulfotalea psychrophila (strain LSv54 / DSM 12343).